The following is a 418-amino-acid chain: Tyrosine--tRNA ligase (418 aa).

Tyr-34 lines the L-tyrosine pocket. A 'HIGH' region motif is present at residues 39 to 48 (PTADSLHLGH). Residues Tyr-169 and Gln-173 each coordinate L-tyrosine. A 'KMSKS' region motif is present at residues 229 to 233 (KFGKS). Lys-232 contributes to the ATP binding site. The region spanning 352–418 (LNIVDMLVTA…GKKKYAVLTY (67 aa)) is the S4 RNA-binding domain.

It belongs to the class-I aminoacyl-tRNA synthetase family. TyrS type 1 subfamily. Homodimer.

The protein resides in the cytoplasm. It carries out the reaction tRNA(Tyr) + L-tyrosine + ATP = L-tyrosyl-tRNA(Tyr) + AMP + diphosphate + H(+). Functionally, catalyzes the attachment of tyrosine to tRNA(Tyr) in a two-step reaction: tyrosine is first activated by ATP to form Tyr-AMP and then transferred to the acceptor end of tRNA(Tyr). In Streptococcus equi subsp. equi (strain 4047), this protein is Tyrosine--tRNA ligase.